Consider the following 464-residue polypeptide: GDNF family receptor alpha-2 (464 aa).

An N-terminal signal peptide occupies residues Met1–Ala21. Disulfide bonds link Cys40–Cys93, Cys95–Cys105, Cys161–Cys222, Cys168–Cys174, Cys185–Cys200, Cys195–Cys241, Cys224–Cys229, Cys251–Cys323, Cys258–Cys264, Cys275–Cys293, and Cys285–Cys347. A glycan (N-linked (GlcNAc...) asparagine) is linked at Asn52. N-linked (GlcNAc...) asparagine glycosylation occurs at Asn357. Residues Val363 to Thr392 are disordered. Over residues Thr381–Thr392 the composition is skewed to low complexity. The N-linked (GlcNAc...) asparagine glycan is linked to Asn413. A lipid anchor (GPI-anchor amidated serine) is attached at Ser444. Residues Arg445–Leu464 constitute a propeptide, removed in mature form.

The protein belongs to the GDNFR family. As to quaternary structure, interacts with NRTN ligand and RET: forms a 2:2:2 ternary complex composed of NRTN ligand, GFRA2 and RET receptor. Also forms a 4:4:4 tetrameric complex composed of 4 copies of NRTN ligand, GFRA2 and RET receptor, which prevents endocytosis of RET. Interacts with SORL1. In terms of tissue distribution, found in both brain and placenta.

It is found in the cell membrane. Functionally, receptor for neurturin (NRTN), a growth factor that supports the survival of sympathetic neurons. NRTN-binding leads to autophosphorylation and activation of the RET receptor. Also able to mediate GDNF signaling through the RET tyrosine kinase receptor. Participates in NRTN-induced 'Ser-727' phosphorylation of STAT3. This Homo sapiens (Human) protein is GDNF family receptor alpha-2 (GFRA2).